A 246-amino-acid polypeptide reads, in one-letter code: Major prion protein (246 aa).

Positions 1-15 are cleaved as a signal peptide; that stretch reads MLVVFVATWSDLGLC. An interaction with GRB2, ERI3 and SYN1 region spans residues 16–223; it reads KKRPKPGGWN…ESQAYYQRGS (208 aa). The tract at residues 18-100 is disordered; the sequence is RPKPGGWNTG…QWHKPSKPKT (83 aa). Repeat copies occupy residues 44 to 52, 53 to 60, 61 to 68, 69 to 76, and 77 to 84. Residues 44-84 form a 5 X 8 AA tandem repeats of P-H-G-G-G-W-G-Q region; it reads PQGGGGWGQPHGGGWGQPHGGGWGQPHGGGWGQPHGGGWGQ. Residues 45–88 show a composition bias toward gly residues; sequence QGGGGWGQPHGGGWGQPHGGGWGQPHGGGWGQPHGGGWGQGGGT. The Cu(2+) site is built by His-54, Gly-55, Gly-56, His-62, Gly-63, Gly-64, His-70, Gly-71, Gly-72, His-78, Gly-79, and Gly-80. Basic residues predominate over residues 91-100; it reads QWHKPSKPKT. Residues Cys-172 and Cys-207 are joined by a disulfide bond. Asn-174 and Asn-190 each carry an N-linked (GlcNAc...) asparagine glycan. Ser-223 is lipidated: GPI-anchor amidated serine. The propeptide at 224 to 246 is removed in mature form; the sequence is SMVLFSSPPVILLISFLIFLIVG.

The protein belongs to the prion family. In terms of assembly, monomer and homodimer. Has a tendency to aggregate into amyloid fibrils containing a cross-beta spine, formed by a steric zipper of superposed beta-strands. Soluble oligomers may represent an intermediate stage on the path to fibril formation. Copper binding may promote oligomerization. Interacts with GRB2, APP, ERI3/PRNPIP and SYN1. Mislocalized cytosolically exposed PrP interacts with MGRN1; this interaction alters MGRN1 subcellular location and causes lysosomal enlargement. Interacts with KIAA1191.

It is found in the cell membrane. The protein localises to the golgi apparatus. Functionally, its primary physiological function is unclear. Has cytoprotective activity against internal or environmental stresses. May play a role in neuronal development and synaptic plasticity. May be required for neuronal myelin sheath maintenance. May play a role in iron uptake and iron homeostasis. Soluble oligomers are toxic to cultured neuroblastoma cells and induce apoptosis (in vitro). Association with GPC1 (via its heparan sulfate chains) targets PRNP to lipid rafts. Also provides Cu(2+) or Zn(2+) for the ascorbate-mediated GPC1 deaminase degradation of its heparan sulfate side chains. This Erythrocebus patas (Red guenon) protein is Major prion protein (PRNP).